Consider the following 183-residue polypeptide: 1,6-anhydro-N-acetylmuramyl-L-alanine amidase AmpD (183 aa).

An N-acetylmuramoyl-L-alanine amidase domain is found at 30 to 167; it reads LLVVHNISLP…APDRKTDPGP (138 aa). His-34 lines the Zn(2+) pocket. Catalysis depends on Glu-116, which acts as the Proton acceptor. Residues His-154 and Asp-164 each coordinate Zn(2+).

This sequence belongs to the N-acetylmuramoyl-L-alanine amidase 2 family. The cofactor is Zn(2+).

It localises to the cytoplasm. The catalysed reaction is Hydrolyzes the link between N-acetylmuramoyl residues and L-amino acid residues in certain cell-wall glycopeptides.. Its function is as follows. Involved in cell wall peptidoglycan recycling. Specifically cleaves the amide bond between the lactyl group of N-acetylmuramic acid and the alpha-amino group of the L-alanine in degradation products containing an anhydro N-acetylmuramyl moiety. Is also involved in beta-lactamase induction. This Escherichia coli (strain K12) protein is 1,6-anhydro-N-acetylmuramyl-L-alanine amidase AmpD (ampD).